A 429-amino-acid chain; its full sequence is Acetyltransferase pyr8 (429 aa).

Transmembrane regions (helical) follow at residues 12–32, 39–56, 69–89, 154–174, 221–241, 300–320, 324–344, 365–385, and 409–429; these read IAQE…VIIT, LRLA…RFSL, GVAA…LLIT, YVLR…LIHM, VCLN…RISA, IFFT…ILGI, GSGA…EDGV, LVGF…YLYP, and VAQK…GGEI.

The protein belongs to the wax synthase family.

It localises to the membrane. Its pathway is secondary metabolite biosynthesis; terpenoid biosynthesis. Functionally, acetyltransferase; part of the gene cluster that mediates the biosynthesis of pyripyropene A, a specific human acyl-coenzyme A:cholesterol acyltransferase 2 inhibitor. The first step of the pathway is the synthesis of nicotinyl-CoA from nicotinic acid by the nicotinic acid-CoA ligase pyr1. Nicotinyl-CoA is then a substrate of polyketide synthase pyr2 to produce 4-hydroxy-6-(3-pyridinyl)-2H-pyran-2-one (HPPO) which is further prenylated by the polyprenyl transferase pyr6 to yield farnesyl-HPPO. The next steps consist of an epoxidation of farnesyl-HPPO to epoxyfarnesyl-HPPO by FAD-dependent monooxygenase pyr5 and a cyclization of the terpenoid portion by the terpene cyclase pyr4 to yield deacetyl-pyripyropene E. The 2 cytochrome P450 monooxygenases pyr3 and pyr9, and the 2 acetyltransferases pyr7 and pyr8 are involved in the conversion of deacetyl-pyripyropene E into pyripyropene A through several cycles of oxidation and acetylation steps. Pyr7 acetylates deacetyl-pyripyropene E to pyripyropene E which is oxidized to 11-deacetyl-pyripyropene O by pyr3, which is in turn acetylated into pyripyropene O by pyr8. Pyripyropene O is then oxidized to deacetyl-pyripyropene A by pyr9. Deacetyl-pyripyropene A is finally acetylated to pyripyropene A by pyr8. In Aspergillus fumigatus (strain ATCC MYA-4609 / CBS 101355 / FGSC A1100 / Af293) (Neosartorya fumigata), this protein is Acetyltransferase pyr8.